The chain runs to 490 residues: Hippocampus abundant transcript 1 protein (490 aa).

The residue at position 1 (methionine 1) is an N-acetylmethionine. The Extracellular segment spans residues 1–40 (MTQGKKKKRAANRSIMLAKKIIIKDGGTPQGIGSPSVYHA). Asparagine 12 carries N-linked (GlcNAc...) asparagine glycosylation. Residues 41–61 (VIVIFLEFFAWGLLTAPTLVV) form a helical membrane-spanning segment. Residues 62–74 (LHETFPKHTFLMN) lie on the Cytoplasmic side of the membrane. A helical transmembrane segment spans residues 75 to 95 (GLIQGVKGLLSFLSAPLIGAL). Over 96-103 (SDVWGRKS) the chain is Extracellular. A helical transmembrane segment spans residues 104–124 (FLLLTVFFTCAPIPLMKISPW). At 125 to 126 (WY) the chain is on the cytoplasmic side. The helical transmembrane segment at 127–147 (FAVISVSGVFAVTFSVVFAYV) threads the bilayer. The Extracellular portion of the chain corresponds to 148 to 160 (ADITQEHERSMAY). The helical transmembrane segment at 161–181 (GLVSATFAASLVTSPAIGAYL) threads the bilayer. Residues 182 to 188 (GRVYGDS) lie on the Cytoplasmic side of the membrane. A helical transmembrane segment spans residues 189–209 (LVVVLATAIALLDICFILVAV). Residues 210 to 243 (PESLPEKMRPASWGAPISWEQADPFASLKKVGQD) are Extracellular-facing. The chain crosses the membrane as a helical span at residues 244-264 (SIVLLICITVFLSYLPEAGQY). The Cytoplasmic segment spans residues 265 to 284 (SSFFLYLRQIMKFSPESVAA). A helical membrane pass occupies residues 285–305 (FIAVLGILSIIAQTIVLSLLM). The Extracellular segment spans residues 306 to 313 (RSIGNKNT). The chain crosses the membrane as a helical span at residues 314–334 (ILLGLGFQILQLAWYGFGSEP). The Cytoplasmic segment spans residues 335–337 (WMM). A helical membrane pass occupies residues 338–358 (WAAGAVAAMSSITFPAVSALV). Over 359–379 (SRTADADQQGVVQGMITGIRG) the chain is Extracellular. The helical transmembrane segment at 380–400 (LCNGLGPALYGFIFYIFHVEL) threads the bilayer. The Cytoplasmic segment spans residues 401–427 (KELPITGTDLGTNTSPQHHFEQNSIIP). The chain crosses the membrane as a helical span at residues 428-448 (GPPFLFGACSVLLALLVALFI). Residues 449–490 (PEHTNLSLRSSSWRKHCGSHSHPHNTQAPGEAKEPLLQDTNV) are Extracellular-facing. A glycan (N-linked (GlcNAc...) asparagine) is linked at asparagine 453. The segment at 465-490 (CGSHSHPHNTQAPGEAKEPLLQDTNV) is disordered.

The protein belongs to the major facilitator superfamily.

The protein resides in the membrane. The polypeptide is Hippocampus abundant transcript 1 protein (Homo sapiens (Human)).